A 129-amino-acid chain; its full sequence is UPF0102 protein Cag_1992 (129 aa).

The protein belongs to the UPF0102 family.

The polypeptide is UPF0102 protein Cag_1992 (Chlorobium chlorochromatii (strain CaD3)).